The primary structure comprises 495 residues: MNQHFDVLIIGAGLSGIGTACHVTAEFPDKTIALLERRERLGGTWDLFRYPGVRSDSDMFTFGYKFRPWRDVKVLADGASIRQYIADTATEFGVDEKIHYGLKVNTAEWSSRQCRWTVAGVHEATGETRTYTCDYLISCTGYYNYDAGYLPDFPGVHRFGGRCVHPQHWPEDLDYSGKKVVVIGSGATAVTLVPAMAGSNPGSAAHVTMLQRSPSYIFSLPAVDKISEVLGRFLPDRWVYEFGRRRNIAIQRKLYQACRRWPKLMRRLLLWEVRRRLGRSVDMSNFTPNYLPWDERLCAVPNGDLFKTLASGAASVVTDQIETFTEKGILCKSGREIEADIIVTATGLNIQMLGGMRLIVDGAEYQLPEKMTYKGVLLENAPNLAWIIGYTNASWTLKSDIAGAYLCRLLRHMADNGYTVATPRDAQDCALDVGMFDQLNSGYVKRGQDIMPRQGSKHPWRVLMHYEKDAKILLEDPIDDGVLHFAAAAQDHAAA.

Residues serine 15, glutamate 36, tryptophan 45, 56-57, and valine 104 contribute to the FAD site; that span reads DS.

The protein belongs to the FAD-binding monooxygenase family. Requires FAD as cofactor.

Functionally, required for maintaining the appropriate mycolic acid composition and permeability of the envelope on its exposure to acidic pH. This Mycobacterium tuberculosis (strain CDC 1551 / Oshkosh) protein is Putative FAD-containing monooxygenase MymA (mymA).